Here is a 269-residue protein sequence, read N- to C-terminus: Bidirectional sugar transporter SWEET1a (269 aa).

Residues 1–6 (MEHIAR) lie on the Extracellular side of the membrane. Residues 7 to 27 (FFFGVSGNVIALFLFLSPVVT) form a helical membrane-spanning segment. Residues 8-96 (FFGVSGNVIA…IFLIFAVDRR (89 aa)) enclose the MtN3/slv 1 domain. Topologically, residues 28–42 (FWRIIRKRSTEDFSG) are cytoplasmic. The helical transmembrane segment at 43–63 (VPYNMTLLNCLLSAWYGLPFV) threads the bilayer. Topologically, residues 64-72 (SPNNILVST) are extracellular. The chain crosses the membrane as a helical span at residues 73–93 (INGTGSVIEAIYVVIFLIFAV). Residues 94-100 (DRRARLR) are Cytoplasmic-facing. Residues 101-121 (MLGLLSIVVSIFATVVLVSLL) form a helical membrane-spanning segment. The Extracellular portion of the chain corresponds to 122 to 129 (ALHGNARK). The helical transmembrane segment at 130-150 (VFCGLAATIFSICMYASPLSI) threads the bilayer. The MtN3/slv 2 domain occupies 132–215 (CGLAATIFSI…ILYFIYRKNK (84 aa)). At 151 to 164 (MRLVIKTKSVEYMP) the chain is on the cytoplasmic side. Residues 165-185 (FLLSLAVFLCGTSWFIYGLLG) form a helical membrane-spanning segment. The Extracellular portion of the chain corresponds to 186–189 (RDPF). Residues 190 to 210 (IIIPNGCGSFLGLVQLILYFI) traverse the membrane as a helical segment. The Cytoplasmic segment spans residues 211 to 269 (YRKNKGPAVPAGKGEAAAAADVEDAKKVAAAVEMADATTTNKAAADTVVGDGKVVASQV).

The protein belongs to the SWEET sugar transporter family. Forms homooligomers and/or heterooligomers.

Its subcellular location is the cell membrane. Mediates both low-affinity uptake and efflux of sugar across the plasma membrane. The chain is Bidirectional sugar transporter SWEET1a from Sorghum bicolor (Sorghum).